A 473-amino-acid chain; its full sequence is Arginine biosynthesis bifunctional protein ArgJ, mitochondrial (473 aa).

Positions 201, 230, 241, 328, 468, and 473 each coordinate substrate. The active-site Nucleophile is the T241.

The protein belongs to the ArgJ family. In terms of assembly, heterodimer of an alpha and a beta chain. The alpha and beta chains are autoproteolytically processed from a single precursor protein within the mitochondrion.

It localises to the mitochondrion matrix. The enzyme catalyses N(2)-acetyl-L-ornithine + L-glutamate = N-acetyl-L-glutamate + L-ornithine. The catalysed reaction is L-glutamate + acetyl-CoA = N-acetyl-L-glutamate + CoA + H(+). It functions in the pathway amino-acid biosynthesis; L-arginine biosynthesis; L-ornithine and N-acetyl-L-glutamate from L-glutamate and N(2)-acetyl-L-ornithine (cyclic): step 1/1. It participates in amino-acid biosynthesis; L-arginine biosynthesis; N(2)-acetyl-L-ornithine from L-glutamate: step 1/4. Its function is as follows. Catalyzes two activities which are involved in the cyclic version of arginine biosynthesis: the synthesis of acetylglutamate from glutamate and acetyl-CoA, and of ornithine by transacetylation between acetylornithine and glutamate. This chain is Arginine biosynthesis bifunctional protein ArgJ, mitochondrial, found in Blastomyces gilchristii (strain SLH14081) (Blastomyces dermatitidis).